We begin with the raw amino-acid sequence, 314 residues long: tRNA dimethylallyltransferase 2 (314 aa).

An ATP-binding site is contributed by 8-15; it reads GPTGTGKS. Substrate is bound at residue 10-15; sequence TGTGKS.

This sequence belongs to the IPP transferase family. Monomer. Mg(2+) serves as cofactor.

The enzyme catalyses adenosine(37) in tRNA + dimethylallyl diphosphate = N(6)-dimethylallyladenosine(37) in tRNA + diphosphate. In terms of biological role, catalyzes the transfer of a dimethylallyl group onto the adenine at position 37 in tRNAs that read codons beginning with uridine, leading to the formation of N6-(dimethylallyl)adenosine (i(6)A). The chain is tRNA dimethylallyltransferase 2 from Mycobacterium ulcerans (strain Agy99).